We begin with the raw amino-acid sequence, 573 residues long: Phosphomethylpyrimidine synthase (573 aa).

Substrate contacts are provided by residues asparagine 190, methionine 219, tyrosine 248, histidine 284, 304–306 (SRG), 345–348 (DGLR), and glutamate 384. A Zn(2+)-binding site is contributed by histidine 388. Residue tyrosine 411 coordinates substrate. Residue histidine 452 coordinates Zn(2+). 3 residues coordinate [4Fe-4S] cluster: cysteine 532, cysteine 535, and cysteine 540.

This sequence belongs to the ThiC family. [4Fe-4S] cluster is required as a cofactor.

The catalysed reaction is 5-amino-1-(5-phospho-beta-D-ribosyl)imidazole + S-adenosyl-L-methionine = 4-amino-2-methyl-5-(phosphooxymethyl)pyrimidine + CO + 5'-deoxyadenosine + formate + L-methionine + 3 H(+). Its pathway is cofactor biosynthesis; thiamine diphosphate biosynthesis. Catalyzes the synthesis of the hydroxymethylpyrimidine phosphate (HMP-P) moiety of thiamine from aminoimidazole ribotide (AIR) in a radical S-adenosyl-L-methionine (SAM)-dependent reaction. This chain is Phosphomethylpyrimidine synthase, found in Geobacillus sp. (strain WCH70).